Here is a 461-residue protein sequence, read N- to C-terminus: UDP-glycosyltransferase 82A1 (461 aa).

UDP-alpha-D-glucose is bound by residues Ser292, Ala349 to Gln351, His366 to Glu374, and Ala388 to Gln391.

Belongs to the UDP-glycosyltransferase family.

This Arabidopsis thaliana (Mouse-ear cress) protein is UDP-glycosyltransferase 82A1 (UGT82A1).